Consider the following 1101-residue polypeptide: Type II inositol polyphosphate 5-phosphatase 15 (1101 aa).

The span at 31 to 40 shows a compositional bias: low complexity; sequence RSAYSSSSSS. Residues 31 to 54 are disordered; sequence RSAYSSSSSSGDDESQPSVDDSNK. WD repeat units lie at residues 121–162, 180–219, 225–263, 403–432, 433–481, and 483–519; these read LRET…GSGR, FGSA…GIEE, AHRG…GKSL, DDSR…MRWD, GNGN…GGWV, and HSGP…PLDN. Catalytic regions lie at residues 749–765 and 828–843; these read DMVI…DDIT and KKRI…YRDN. Residue lysine 907 forms a Glycyl lysine isopeptide (Lys-Gly) (interchain with G-Cter in ubiquitin) linkage.

It belongs to the inositol polyphosphate 5-phosphatase family. It depends on Mg(2+) as a cofactor. In terms of tissue distribution, predominantly expressed in interfascicular fibers and vascular bundles. Expressed in seedlings, stems, roots and flowers. Expressed at lower level in mature leaves.

It carries out the reaction a 1,2-diacyl-sn-glycero-3-phospho-(1D-myo-inositol-4,5-bisphosphate) + H2O = a 1,2-diacyl-sn-glycero-3-phospho-(1D-myo-inositol 4-phosphate) + phosphate. The catalysed reaction is a 1,2-diacyl-sn-glycero-3-phospho-(1D-myo-inositol-3,4,5-trisphosphate) + H2O = a 1,2-diacyl-sn-glycero-3-phospho-(1D-myo-inositol-3,4-bisphosphate) + phosphate. It catalyses the reaction 1D-myo-inositol 1,4,5-trisphosphate + H2O = 1D-myo-inositol 1,4-bisphosphate + phosphate. Functionally, has phosphatase activity toward PtdIns(4,5)P2, PtdIns(3,4,5)P3 and Ins(1,4,5)P3. Has a higher substrate affinity toward PtdIns(4,5)P2. Required for secondary wall synthesis and actin organization in fiber cells. The sequence is that of Type II inositol polyphosphate 5-phosphatase 15 from Arabidopsis thaliana (Mouse-ear cress).